Here is a 437-residue protein sequence, read N- to C-terminus: Trigger factor (437 aa).

The PPIase FKBP-type domain occupies 161-246; that stretch reads DDQVNIDFVG…VNSVSAPVLP (86 aa).

The protein belongs to the FKBP-type PPIase family. Tig subfamily.

Its subcellular location is the cytoplasm. It catalyses the reaction [protein]-peptidylproline (omega=180) = [protein]-peptidylproline (omega=0). Functionally, involved in protein export. Acts as a chaperone by maintaining the newly synthesized protein in an open conformation. Functions as a peptidyl-prolyl cis-trans isomerase. The polypeptide is Trigger factor (Pseudomonas putida (strain GB-1)).